The sequence spans 312 residues: Glyoxylate/hydroxypyruvate reductase A (312 aa).

Arg227 is an active-site residue. Catalysis depends on His275, which acts as the Proton donor.

This sequence belongs to the D-isomer specific 2-hydroxyacid dehydrogenase family. GhrA subfamily.

Its subcellular location is the cytoplasm. The enzyme catalyses glycolate + NADP(+) = glyoxylate + NADPH + H(+). It catalyses the reaction (R)-glycerate + NAD(+) = 3-hydroxypyruvate + NADH + H(+). It carries out the reaction (R)-glycerate + NADP(+) = 3-hydroxypyruvate + NADPH + H(+). Catalyzes the NADPH-dependent reduction of glyoxylate and hydroxypyruvate into glycolate and glycerate, respectively. This Salmonella heidelberg (strain SL476) protein is Glyoxylate/hydroxypyruvate reductase A.